The chain runs to 149 residues: Transcriptional repressor NrdR (149 aa).

A zinc finger lies at 3–34; that stretch reads CPFCGNLETQVVETRVSEDADFIRRRRQCGAC. The ATP-cone domain occupies 49–139; that stretch reads PAIVKKDGRR…VYRSFEDIDE (91 aa).

It belongs to the NrdR family. Zn(2+) is required as a cofactor.

Its function is as follows. Negatively regulates transcription of bacterial ribonucleotide reductase nrd genes and operons by binding to NrdR-boxes. The protein is Transcriptional repressor NrdR of Polaromonas sp. (strain JS666 / ATCC BAA-500).